The following is a 766-amino-acid chain: Single-minded homolog 1 (766 aa).

The bHLH domain occupies 1-53; it reads MKEKSKNAARTRREKENSEFYELAKLLPLPSAITSQLDKASIIRLTTSYLKMR. PAS domains follow at residues 77–147 and 218–288; these read GREL…QPYH and PPSA…LVKG. Residues 292 to 335 enclose the PAC domain; it reads TKYYRFLAKHGGWVWVQSYATIVHNSRSSRPHCIVSVNYVLTDT. A Single-minded C-terminal domain is found at 336-766; it reads EYKGLQLSLD…GTSVIITNGS (431 aa). Residues 353 to 365 are compositionally biased toward polar residues; the sequence is AFSYTSSSTPTMT. 2 disordered regions span residues 353–431 and 528–563; these read AFSY…SQHD and WDED…EPSK. The Nuclear localization signal signature appears at 368-387; that stretch reads RKGAKSRLSSSKSKSRTSPY. Positions 373-385 are enriched in low complexity; it reads SRLSSSKSKSRTS. Over residues 394-404 the composition is skewed to basic and acidic residues; the sequence is HTERSESDHDS.

In terms of assembly, efficient DNA binding requires dimerization with another bHLH protein. Heterodimer; forms a heterodimer with ARNT, ARNT2.

Its subcellular location is the nucleus. Functionally, transcriptional factor that may have pleiotropic effects during embryogenesis and in the adult. The sequence is that of Single-minded homolog 1 (SIM1) from Pan paniscus (Pygmy chimpanzee).